The sequence spans 861 residues: ATP-dependent helicase rhp16 (861 aa).

The span at 1–13 (MGTSCNKINSNSN) shows a compositional bias: polar residues. Positions 1 to 217 (MGTSCNKINS…KSIPSHERTH (217 aa)) are disordered. 2 stretches are compositionally biased toward basic and acidic residues: residues 14–23 (KGKENMHFVL) and 38–57 (VERD…KEFE). Positions 60-82 (LSTNKKLIIQSNNTSSQHSTPPL) are enriched in polar residues. The span at 83–95 (SISDTSTHTGSST) shows a compositional bias: low complexity. Positions 96–106 (DNVEANPNTGF) are enriched in polar residues. Residues 109-123 (ARKRSLRSSNLKKKF) show a composition bias toward basic residues. The segment covering 131–145 (ESNESEFIDDDESDE) has biased composition (acidic residues). Residues 193-204 (ARASSSASSSSR) are compositionally biased toward low complexity. The region spanning 268-442 (RQEDSSFGGG…FSLLRFLRAD (175 aa)) is the Helicase ATP-binding domain. 281–288 (DEMGMGKT) contacts ATP. The short motif at 393-396 (DEAH) is the DEAH box element. The segment at 609–652 (CKICDEVAQDAIESRCHHTFCRLCVTEYINAAGDGENVNCPSCF) adopts an RING-type zinc-finger fold. Residues 695–848 (LVEELYLLRK…TIDQDEKALN (154 aa)) enclose the Helicase C-terminal domain.

Belongs to the SNF2/RAD54 helicase family.

Its subcellular location is the nucleus. Functionally, involved in global genome repair (GGR) via nucleotide excision repair (NER), in conjunction with rhp7, after UV irradiation. This Schizosaccharomyces pombe (strain 972 / ATCC 24843) (Fission yeast) protein is ATP-dependent helicase rhp16 (rhp16).